Consider the following 264-residue polypeptide: Propanediol uptake facilitator PduF (264 aa).

Transmembrane regions (helical) follow at residues 10 to 30 (GAEFLGTGLFLFFGIGCLSAL) and 42 to 62 (ICIIWGLGISLAVYLTAGISG). Positions 66–68 (NPA) match the NPA 1 motif. Transmembrane regions (helical) follow at residues 84-104 (VLPYIIAQFAGAFGGALLAYV), 143-163 (VWQAALVEVVITSILMGMIMA), and 179-199 (LLIGILVAVIGASTGPLTGFA). Residues 201–203 (NPA) carry the NPA 2 motif. The chain crosses the membrane as a helical span at residues 228–248 (IPYFIVPIVAPVIGACAGAAI).

The protein belongs to the MIP/aquaporin (TC 1.A.8) family.

Its subcellular location is the cell inner membrane. Functionally, probably facilitates diffusion of 1,2-propanediol (1,2-PD) into the cell. Modeling suggests active transport of 1,2-PD is required at low extracellular concentrations to allow maximal growth and saturation of PduP/PduQ within the bacterial microcompartment (BMC); this protein may be the cellular transporter. In terms of biological role, the 1,2-PD-specific bacterial microcompartment (BMC) concentrates low levels of 1,2-PD catabolic enzymes, concentrates volatile reaction intermediates thus enhancing pathway flux and keeps the level of toxic, mutagenic propionaldehyde low. The chain is Propanediol uptake facilitator PduF from Salmonella typhimurium (strain LT2 / SGSC1412 / ATCC 700720).